The sequence spans 624 residues: Chitin elicitor receptor kinase 1 (624 aa).

Residues 1 to 18 (MEASTSLLVLVLAAAAFA) form the signal peptide. The Extracellular segment spans residues 19-240 (AGTVTEAAGD…SPGKGASAGA (222 aa)). 3 disulfides stabilise this stretch: Cys30–Cys93, Cys34–Cys160, and Cys91–Cys158. The N-linked (GlcNAc...) asparagine glycan is linked to Asn48. 115-121 (RGQIYTS) contacts chitin. The N-linked (GlcNAc...) asparagine glycan is linked to Asn128. Chitin is bound at residue 142 to 148 (PANNIPD). 2 N-linked (GlcNAc...) asparagine glycosylation sites follow: Asn153 and Asn157. The LysM domain maps to 173-218 (LTYPLRAEDTLASVAATYGLSSQLDVVRRYNPGMESATGSGIVYIP). Residue Asn223 is glycosylated (N-linked (GlcNAc...) asparagine). Residues 241–261 (IAGGVVAGVVVLAAIFLYIIF) traverse the membrane as a helical segment. Topologically, residues 262–624 (YRRRKAKQAT…QGLVNLMSGR (363 aa)) are cytoplasmic. A Protein kinase domain is found at 324-599 (FSIGNKIGQG…RSVVVALMTL (276 aa)). Residues 330–338 (IGQGGFGAV) and Lys351 each bind ATP. The Proton acceptor role is filled by Asp443.

This sequence belongs to the protein kinase superfamily. Ser/Thr protein kinase family. As to quaternary structure, homooligomer. Interacts with CEBIP. Interacts with LYP4 and LYP6. Interacts with RLCK176. Autophosphorylated; induced by chitin and derivatives. Expressed in seedlings, roots, shoots and stems, and, to a lower extent, in flowers.

It localises to the cell membrane. The enzyme catalyses L-seryl-[protein] + ATP = O-phospho-L-seryl-[protein] + ADP + H(+). The catalysed reaction is L-threonyl-[protein] + ATP = O-phospho-L-threonyl-[protein] + ADP + H(+). Its function is as follows. Lysin motif (LysM) receptor kinase required as a cell surface receptor for chitin elicitor (chitooligosaccharides) signaling leading to innate immunity in response to biotic stresses. Involved in the resistance to pathogenic fungi, probably by sensing microbe-associated molecular patterns (MAMP) and pathogen-associated molecular patterns (PAMP). Involved in the detection of microbial peptidoglycans (PGNs) and mediates PGN response. Plays dual roles in PGN and chitin signaling during innate immunity. Acts as an adapter for LYP4 and LYP6 and mediates signal transduction from the extracellular to intracellular spaces. Participates in the activation of defense genes during response to PGN and chitin. Phosphorylates the downstream partner RLCK185 in response to chitin elicitation. This Oryza sativa subsp. japonica (Rice) protein is Chitin elicitor receptor kinase 1.